Reading from the N-terminus, the 129-residue chain is Small ribosomal subunit protein uS11 (129 aa).

Belongs to the universal ribosomal protein uS11 family. As to quaternary structure, part of the 30S ribosomal subunit. Interacts with proteins S7 and S18. Binds to IF-3.

In terms of biological role, located on the platform of the 30S subunit, it bridges several disparate RNA helices of the 16S rRNA. Forms part of the Shine-Dalgarno cleft in the 70S ribosome. This Cereibacter sphaeroides (strain ATCC 17029 / ATH 2.4.9) (Rhodobacter sphaeroides) protein is Small ribosomal subunit protein uS11.